Here is a 139-residue protein sequence, read N- to C-terminus: uncharacterized protein (139 aa).

2 helical membrane-spanning segments follow: residues 71–91 and 97–117; these read LFSA…ATLL and ENEL…FVMV.

It belongs to the RseC family.

It localises to the cell inner membrane. This is an uncharacterized protein from Haemophilus influenzae (strain ATCC 51907 / DSM 11121 / KW20 / Rd).